A 489-amino-acid chain; its full sequence is IPT/TIG domain-containing protein BACOVA_02650 (489 aa).

Positions 1-27 are cleaved as a signal peptide; sequence MKSIYKYLDTRLFLIGLLVLPFLAVVS. Residue Cys-28 is the site of N-palmitoyl cysteine attachment. Cys-28 carries the S-diacylglycerol cysteine lipid modification. 3 IPT/TIG domains span residues 57-103, 136-204, and 232-304; these read VNPG…PNEL, PYIT…TAPA, and PVVT…AIGG.

It localises to the cell outer membrane. It participates in glucan metabolism; xyloglucan degradation. Polysaccharide-binding protein present at the surface of the cell. Probably mediates xyloglucan-binding before xyloglucan transport in the periplasm for degradation. This Bacteroides ovatus (strain ATCC 8483 / DSM 1896 / JCM 5824 / BCRC 10623 / CCUG 4943 / NCTC 11153) protein is IPT/TIG domain-containing protein BACOVA_02650.